A 173-amino-acid polypeptide reads, in one-letter code: MNLRKFLGGTVLVAFMLFSYSEQNQVNVLCSTDWFMVTVHPFLLNNDVYVHFYEVHLGLGCPPNHVHPHFYQFHYRVTECGIRIKAVSPDVVIYSSEIHYASKGSSTKYVIPVSCAAPRRSPWLTKPYSAKAPSNNMGATPKNDTSYHVFTLPEPSEQPNCSCPPYVYNQKSM.

Positions 1–23 (MNLRKFLGGTVLVAFMLFSYSEQ) are cleaved as a signal peptide.

Belongs to the PLAC1 family. Expressed in placenta.

The protein localises to the secreted. May play a role in placental development. The protein is Placenta-specific protein 1 of Mus musculus (Mouse).